A 321-amino-acid polypeptide reads, in one-letter code: NADPH-dependent codeinone reductase 1-2 (321 aa).

NADPH is bound by residues threonine 27 and aspartate 51. Active-site proton donor residues include tyrosine 56 and histidine 119. Residue histidine 119 participates in substrate binding. NADPH-binding residues include serine 165, glutamine 187, serine 214, leucine 216, serine 264, and arginine 269. Residues serine 299 to aspartate 321 are disordered.

Belongs to the aldo/keto reductase family. As to expression, latex secreting cells (laticifer cells). Expressed constitutively in all organs with highest levels in capsules. Restricted to the parietal region of sieve elements adjacent or proximal to laticifers in roots, stems, leaves and carpels.

Its subcellular location is the cytoplasm. The protein resides in the cytosol. The catalysed reaction is codeine + NADP(+) = codeinone + NADPH + H(+). It carries out the reaction neopine + NADP(+) = neopinone + NADPH + H(+). It catalyses the reaction morphine + NADP(+) = morphinone + NADPH + H(+). The enzyme catalyses neomorphine + NADP(+) = neomorphinone + NADPH + H(+). It functions in the pathway alkaloid biosynthesis; morphine biosynthesis. Its function is as follows. NADPH-dependent codeinone reductase involved in biosynthesis of morphinan-type benzylisoquinoline and opiate alkaloids natural products. Reduces codeinone to codeine in the penultimate step in morphine biosynthesis. Can use morphinone, hydrocodone and hydromorphone as substrate during reductive reaction with NADPH as cofactor, and morphine and dihydrocodeine as substrate during oxidative reaction with NADP as cofactor. Converts morphinone to morphine, and neomorphinone to neomorphine. Reduces irreversibly neopinone, a spontaneous isomer of codeinone, to neopine; in planta, neopine levels are limited to low levels. The polypeptide is NADPH-dependent codeinone reductase 1-2 (Papaver somniferum (Opium poppy)).